The primary structure comprises 1177 residues: Lysylphosphatidylglycerol biosynthesis bifunctional protein LysX (1177 aa).

Disordered stretches follow at residues 1–40 (MRRA…AKFV) and 61–85 (VTLA…PANR). The interval 1 to 676 (MRRAGRSRQF…LLHHDGSAPD (676 aa)) is phosphatidylglycerol lysyltransferase. The span at 8-21 (RQFSSVEEAFSTSA) shows a compositional bias: polar residues. A compositionally biased stretch (low complexity) spans 65-82 (SPGSRSGSGPRSGPRLGP). The next 6 helical transmembrane spans lie at 93–113 (VPAA…LGSV), 135–155 (FPDT…ALTA), 159–179 (IAWL…VADI), 189–209 (IFGE…LVLA), 227–247 (AVLV…VELF), and 281–301 (VFLN…ATIV). The disordered stretch occupies residues 673 to 693 (SAPDVSGLRPERTDAEEARSR). Residues 677–1177 (VSGLRPERTD…TLPFPLAKPH (501 aa)) form a lysine--tRNA ligase region. Positions 681–693 (RPERTDAEEARSR) are enriched in basic and acidic residues. The Mg(2+) site is built by Asp1089 and Glu1096.

It in the N-terminal section; belongs to the LPG synthetase family. In the C-terminal section; belongs to the class-II aminoacyl-tRNA synthetase family. The cofactor is Mg(2+).

It is found in the cell membrane. It carries out the reaction tRNA(Lys) + L-lysine + ATP = L-lysyl-tRNA(Lys) + AMP + diphosphate. The catalysed reaction is L-lysyl-tRNA(Lys) + a 1,2-diacyl-sn-glycero-3-phospho-(1'-sn-glycerol) = a 1,2-diacyl-sn-glycero-3-phospho-1'-(3'-O-L-lysyl)-sn-glycerol + tRNA(Lys). In terms of biological role, catalyzes the production of L-lysyl-tRNA(Lys)transfer and the transfer of a lysyl group from L-lysyl-tRNA(Lys) to membrane-bound phosphatidylglycerol (PG), which produces lysylphosphatidylglycerol (LPG), one of the components of the bacterial membrane with a positive net charge. LPG synthesis contributes to the resistance to cationic antimicrobial peptides (CAMPs) and likely protects M.tuberculosis against the CAMPs produced by competiting microorganisms (bacteriocins). In fact, the modification of anionic phosphatidylglycerol with positively charged L-lysine results in repulsion of the peptides. This is Lysylphosphatidylglycerol biosynthesis bifunctional protein LysX (lysX) from Mycobacterium avium (strain 104).